We begin with the raw amino-acid sequence, 519 residues long: GMP synthase [glutamine-hydrolyzing] (519 aa).

Residues 4–201 form the Glutamine amidotransferase type-1 domain; that stretch reads AILILDFGSQ…VHDICDAGYD (198 aa). Cys-81 acts as the Nucleophile in catalysis. Catalysis depends on residues His-175 and Glu-177. One can recognise a GMPS ATP-PPase domain in the interval 202-394; that stretch reads WNMPDYVEEA…LGLPRDLVFR (193 aa). ATP is bound at residue 229–235; it reads SGGVDSS.

In terms of assembly, homodimer.

The catalysed reaction is XMP + L-glutamine + ATP + H2O = GMP + L-glutamate + AMP + diphosphate + 2 H(+). It participates in purine metabolism; GMP biosynthesis; GMP from XMP (L-Gln route): step 1/1. Its function is as follows. Catalyzes the synthesis of GMP from XMP. The polypeptide is GMP synthase [glutamine-hydrolyzing] (Nitrosomonas eutropha (strain DSM 101675 / C91 / Nm57)).